Here is a 486-residue protein sequence, read N- to C-terminus: MATASDSKYKRTNTNGMQHQPLDVAIVGGGLVGSLLALHLGKKGHEVNLYEYREDIRTAELVIGRSINLALSARGRRALAEVGLEDALLNHGIPMSGRMLHDVNGKCKIVPYDANTNQCIYSVGRKHLNEVLLNAAEKYPNIHLHFNHKLVSANLDEGNLSMVDPVTKDVKSARADLIVGCDGAYSAVRKEIVKRPRYDFSQTYIEHGYLELCIPPTAGGEFAMPHNYLHIWPRGQFMMIALPNQDRTWTVTLFMPFTQFHSITDQGLLLDFFRQHFPDAIELIGRERLVKDFFKTKAQPLVMIKCRPYHIGAKALIIGDAAHAMVPFYGQGMNAGFEDCSVLTELFNQYGTDLARILPEFSEKRWEDAHAICDLAMYNYIEMRDLVTKRSYLLRKKLDELLFWMMPNTWVPLYNSVSFSHMRYSKCIANRAWQDKILTRVLYGASIASVAAIGGLCYRHVTMGHLERLSTRILSTFQLLKPKASV.

Transmembrane regions (helical) follow at residues 401–424 and 437–459; these read LLFW…HMRY and ILTR…LCYR.

It belongs to the aromatic-ring hydroxylase family. KMO subfamily. FAD serves as cofactor.

It localises to the mitochondrion. Its subcellular location is the membrane. The enzyme catalyses L-kynurenine + NADPH + O2 + H(+) = 3-hydroxy-L-kynurenine + NADP(+) + H2O. Its pathway is cofactor biosynthesis; NAD(+) biosynthesis; quinolinate from L-kynurenine: step 1/3. Catalyzes the hydroxylation of L-kynurenine (L-Kyn) to form 3-hydroxy-L-kynurenine (L-3OHKyn). Required for synthesis of quinolinic acid. This Anopheles gambiae (African malaria mosquito) protein is Kynurenine 3-monooxygenase (kh).